The following is a 315-amino-acid chain: Pantothenate synthetase (315 aa).

45-52 (MGALHEGH) provides a ligand contact to ATP. His-52 serves as the catalytic Proton donor. Gln-77 contacts (R)-pantoate. Gln-77 provides a ligand contact to beta-alanine. 163–166 (GEKD) provides a ligand contact to ATP. Residue Gln-169 participates in (R)-pantoate binding. ATP is bound by residues Val-192 and 200-203 (MSSR).

The protein belongs to the pantothenate synthetase family. Homodimer.

It localises to the cytoplasm. It catalyses the reaction (R)-pantoate + beta-alanine + ATP = (R)-pantothenate + AMP + diphosphate + H(+). It functions in the pathway cofactor biosynthesis; (R)-pantothenate biosynthesis; (R)-pantothenate from (R)-pantoate and beta-alanine: step 1/1. In terms of biological role, catalyzes the condensation of pantoate with beta-alanine in an ATP-dependent reaction via a pantoyl-adenylate intermediate. The sequence is that of Pantothenate synthetase from Mycobacterium ulcerans (strain Agy99).